The primary structure comprises 1112 residues: Zinc finger protein 654 (1112 aa).

Positions P482 to P514 are disordered. The segment covering S494–D508 has biased composition (acidic residues). 5 consecutive C2H2-type zinc fingers follow at residues F566 to H588, F738 to H763, G779 to H801, Y807 to H831, and A836 to H860. Disordered stretches follow at residues F885–T906 and V997–S1018. 2 stretches are compositionally biased toward polar residues: residues S886–S899 and H1002–S1018. Phosphoserine is present on residues S1107 and S1111.

This sequence belongs to the krueppel C2H2-type zinc-finger protein family.

It localises to the nucleus. May be involved in transcriptional regulation. The sequence is that of Zinc finger protein 654 from Mus musculus (Mouse).